Consider the following 189-residue polypeptide: GTP cyclohydrolase 1 (189 aa).

3 residues coordinate Zn(2+): C76, H79, and C149.

The protein belongs to the GTP cyclohydrolase I family. As to quaternary structure, homomer.

It carries out the reaction GTP + H2O = 7,8-dihydroneopterin 3'-triphosphate + formate + H(+). It participates in cofactor biosynthesis; 7,8-dihydroneopterin triphosphate biosynthesis; 7,8-dihydroneopterin triphosphate from GTP: step 1/1. The protein is GTP cyclohydrolase 1 of Dehalococcoides mccartyi (strain ATCC BAA-2100 / JCM 16839 / KCTC 5957 / BAV1).